The chain runs to 254 residues: NAD kinase (254 aa).

The active-site Proton acceptor is Asp44. NAD(+) is bound by residues 44-45 (DG), 114-115 (NE), Asp144, Ala152, 155-160 (TAYNYS), and Ala179.

Belongs to the NAD kinase family. It depends on a divalent metal cation as a cofactor.

Its subcellular location is the cytoplasm. The enzyme catalyses NAD(+) + ATP = ADP + NADP(+) + H(+). Functionally, involved in the regulation of the intracellular balance of NAD and NADP, and is a key enzyme in the biosynthesis of NADP. Catalyzes specifically the phosphorylation on 2'-hydroxyl of the adenosine moiety of NAD to yield NADP. This chain is NAD kinase, found in Cereibacter sphaeroides (strain ATCC 17023 / DSM 158 / JCM 6121 / CCUG 31486 / LMG 2827 / NBRC 12203 / NCIMB 8253 / ATH 2.4.1.) (Rhodobacter sphaeroides).